The chain runs to 452 residues: Pup--protein ligase (452 aa).

Glutamate 9 contacts Mg(2+). Arginine 53 lines the ATP pocket. A Mg(2+)-binding site is contributed by tyrosine 55. Aspartate 57 serves as the catalytic Proton acceptor. Glutamate 63 lines the Mg(2+) pocket. ATP contacts are provided by threonine 66 and tryptophan 419.

The protein belongs to the Pup ligase/Pup deamidase family. Pup-conjugating enzyme subfamily.

The enzyme catalyses ATP + [prokaryotic ubiquitin-like protein]-L-glutamate + [protein]-L-lysine = ADP + phosphate + N(6)-([prokaryotic ubiquitin-like protein]-gamma-L-glutamyl)-[protein]-L-lysine.. It participates in protein degradation; proteasomal Pup-dependent pathway. It functions in the pathway protein modification; protein pupylation. Functionally, catalyzes the covalent attachment of the prokaryotic ubiquitin-like protein modifier Pup to the proteasomal substrate proteins, thereby targeting them for proteasomal degradation. This tagging system is termed pupylation. The ligation reaction involves the side-chain carboxylate of the C-terminal glutamate of Pup and the side-chain amino group of a substrate lysine. This Mycobacterium avium (strain 104) protein is Pup--protein ligase.